Reading from the N-terminus, the 386-residue chain is Patatin-10 (386 aa).

The first 23 residues, 1 to 23 (MATTKSFLILFFMILATTSSTCA), serve as a signal peptide directing secretion. A PNPLA domain is found at 32 to 229 (LSIDGGGIKG…TVGDPALLSL (198 aa)). Residues 36-41 (GGGIKG) carry the GXGXXG motif. Residues 75-79 (GTSTG) carry the GXSXG motif. S77 (nucleophile) is an active-site residue. Residue N115 is glycosylated (N-linked (GlcNAc...) asparagine). D215 functions as the Proton acceptor in the catalytic mechanism. A DGA/G motif is present at residues 215–217 (DGG). Residues 321–384 (ENALTGTTTE…NRKKLRANKA (64 aa)) adopt a coiled-coil conformation.

The protein belongs to the patatin family. In terms of tissue distribution, tuber.

It localises to the vacuole. Its function is as follows. Probable lipolytic acyl hydrolase (LAH), an activity which is thought to be involved in the response of tubers to pathogens. The protein is Patatin-10 of Solanum tuberosum (Potato).